A 236-amino-acid chain; its full sequence is 2,3,4,5-tetrahydropyridine-2,6-dicarboxylate N-acetyltransferase (236 aa).

Belongs to the transferase hexapeptide repeat family. DapH subfamily.

The enzyme catalyses (S)-2,3,4,5-tetrahydrodipicolinate + acetyl-CoA + H2O = L-2-acetamido-6-oxoheptanedioate + CoA. It participates in amino-acid biosynthesis; L-lysine biosynthesis via DAP pathway; LL-2,6-diaminopimelate from (S)-tetrahydrodipicolinate (acetylase route): step 1/3. Its function is as follows. Catalyzes the transfer of an acetyl group from acetyl-CoA to tetrahydrodipicolinate. The polypeptide is 2,3,4,5-tetrahydropyridine-2,6-dicarboxylate N-acetyltransferase (Clostridium perfringens (strain ATCC 13124 / DSM 756 / JCM 1290 / NCIMB 6125 / NCTC 8237 / Type A)).